A 264-amino-acid polypeptide reads, in one-letter code: Orotidine 5'-phosphate decarboxylase (264 aa).

Substrate contacts are provided by residues D40, 62–64 (KTH), 93–102 (DRKFADIGNT), Y214, and R233. The active-site Proton donor is the K95.

Belongs to the OMP decarboxylase family.

The catalysed reaction is orotidine 5'-phosphate + H(+) = UMP + CO2. Its pathway is pyrimidine metabolism; UMP biosynthesis via de novo pathway; UMP from orotate: step 2/2. The sequence is that of Orotidine 5'-phosphate decarboxylase (ura4) from Schizosaccharomyces pombe (strain 972 / ATCC 24843) (Fission yeast).